A 242-amino-acid polypeptide reads, in one-letter code: Biosynthetic peptidoglycan transglycosylase (242 aa).

A helical transmembrane segment spans residues 19–39 (LMVVLAVFWGGGIALFSVAPV).

This sequence belongs to the glycosyltransferase 51 family.

It localises to the cell inner membrane. It catalyses the reaction [GlcNAc-(1-&gt;4)-Mur2Ac(oyl-L-Ala-gamma-D-Glu-L-Lys-D-Ala-D-Ala)](n)-di-trans,octa-cis-undecaprenyl diphosphate + beta-D-GlcNAc-(1-&gt;4)-Mur2Ac(oyl-L-Ala-gamma-D-Glu-L-Lys-D-Ala-D-Ala)-di-trans,octa-cis-undecaprenyl diphosphate = [GlcNAc-(1-&gt;4)-Mur2Ac(oyl-L-Ala-gamma-D-Glu-L-Lys-D-Ala-D-Ala)](n+1)-di-trans,octa-cis-undecaprenyl diphosphate + di-trans,octa-cis-undecaprenyl diphosphate + H(+). It functions in the pathway cell wall biogenesis; peptidoglycan biosynthesis. Functionally, peptidoglycan polymerase that catalyzes glycan chain elongation from lipid-linked precursors. In Escherichia coli (strain ATCC 8739 / DSM 1576 / NBRC 3972 / NCIMB 8545 / WDCM 00012 / Crooks), this protein is Biosynthetic peptidoglycan transglycosylase.